A 275-amino-acid chain; its full sequence is NH(3)-dependent NAD(+) synthetase (275 aa).

An ATP-binding site is contributed by 46-53 (GISGGQDS). Asp-52 is a binding site for Mg(2+). A deamido-NAD(+)-binding site is contributed by Arg-140. Thr-160 is an ATP binding site. Glu-165 provides a ligand contact to Mg(2+). Deamido-NAD(+) contacts are provided by Lys-173 and Asp-180. ATP contacts are provided by Lys-189 and Thr-211. Position 260–261 (260–261 (HK)) interacts with deamido-NAD(+).

The protein belongs to the NAD synthetase family. In terms of assembly, homodimer.

It carries out the reaction deamido-NAD(+) + NH4(+) + ATP = AMP + diphosphate + NAD(+) + H(+). Its pathway is cofactor biosynthesis; NAD(+) biosynthesis; NAD(+) from deamido-NAD(+) (ammonia route): step 1/1. Its function is as follows. Catalyzes the ATP-dependent amidation of deamido-NAD to form NAD. Uses ammonia as a nitrogen source. The chain is NH(3)-dependent NAD(+) synthetase from Shigella dysenteriae serotype 1 (strain Sd197).